Reading from the N-terminus, the 160-residue chain is Inner membrane protein YcdZ (160 aa).

5 helical membrane-spanning segments follow: residues 20–42, 50–70, 72–92, 99–119, and 123–143; these read WGAVSLGLLSWAGFLGCTAYFAC, LLISACTLLSGMVWALVIIHG, ALAPHLEIVSYVLTGIVAFLM, LLLSFVPGTFIGACATFAGQG, and LVLPSLALGLIFGYAMKNSGL.

This sequence to E.coli YahC.

Its subcellular location is the cell inner membrane. This chain is Inner membrane protein YcdZ (ycdZ), found in Salmonella typhimurium (strain LT2 / SGSC1412 / ATCC 700720).